A 247-amino-acid polypeptide reads, in one-letter code: Fasciclin-like arabinogalactan protein 6 (247 aa).

Residues 1-23 (MSSSLFSYVVLLIFLFTIPYIQS) form the signal peptide. Residues 36–182 (PINLTAILEA…LAVYVVDSVL (147 aa)) form the FAS1 domain. N-linked (GlcNAc...) asparagine glycosylation is found at asparagine 38, asparagine 57, asparagine 70, asparagine 142, and asparagine 153. The segment covering 192–212 (TTPTGAPAPKSSTSSSDADSP) has biased composition (low complexity). The interval 192 to 221 (TTPTGAPAPKSSTSSSDADSPAADDEHKSA) is disordered. A lipid anchor (GPI-anchor amidated glycine) is attached at glycine 222. A propeptide spans 223-247 (SSVKRTSLGIVVSFALFCCSVIYIA) (removed in mature form).

It belongs to the fasciclin-like AGP family.

The protein resides in the cell membrane. Its function is as follows. May be a cell surface adhesion protein. The chain is Fasciclin-like arabinogalactan protein 6 (FLA6) from Arabidopsis thaliana (Mouse-ear cress).